The chain runs to 290 residues: Probable branched-chain-amino-acid aminotransferase (290 aa).

Residue K155 is modified to N6-(pyridoxal phosphate)lysine.

This sequence belongs to the class-IV pyridoxal-phosphate-dependent aminotransferase family. Requires pyridoxal 5'-phosphate as cofactor.

The catalysed reaction is L-leucine + 2-oxoglutarate = 4-methyl-2-oxopentanoate + L-glutamate. It catalyses the reaction L-isoleucine + 2-oxoglutarate = (S)-3-methyl-2-oxopentanoate + L-glutamate. It carries out the reaction L-valine + 2-oxoglutarate = 3-methyl-2-oxobutanoate + L-glutamate. It functions in the pathway amino-acid biosynthesis; L-isoleucine biosynthesis; L-isoleucine from 2-oxobutanoate: step 4/4. The protein operates within amino-acid biosynthesis; L-leucine biosynthesis; L-leucine from 3-methyl-2-oxobutanoate: step 4/4. It participates in amino-acid biosynthesis; L-valine biosynthesis; L-valine from pyruvate: step 4/4. Its function is as follows. Acts on leucine, isoleucine and valine. This is Probable branched-chain-amino-acid aminotransferase (ilvE) from Rickettsia felis (strain ATCC VR-1525 / URRWXCal2) (Rickettsia azadi).